The primary structure comprises 189 residues: Prostaglandin-H2 D-isomerase (189 aa).

An N-terminal signal peptide occupies residues 1–24; sequence MAALRMLWMGLVLLGLLGFPQTPA. Glutamine 25 bears the Pyrrolidone carboxylic acid mark. The N-linked (GlcNAc...) asparagine glycan is linked to asparagine 51. The active-site Nucleophile is cysteine 65. Asparagine 78 carries an N-linked (GlcNAc...) asparagine glycan. Residues cysteine 89 and cysteine 186 are joined by a disulfide bond.

This sequence belongs to the calycin superfamily. Lipocalin family. As to quaternary structure, monomer. As to expression, abundant in the brain and CNS, where it is expressed in tissues of the blood-brain barrier and secreted into the cerebro-spinal fluid. In the male reproductive system, it is expressed in the testis, efferent ducts and epididymis, and is secreted into the seminal fluid. In the eye, it is expressed in the pigmented epithelium of the retina and the nonpigmented epithelium of the ciliary body, and secreted into the aqueous humor. Low levels detected in various tissue fluids such as serum, normal urine, ascitic fluid and tear fluid. Also found in a number of other organs including the ear, heart and lung.

It localises to the rough endoplasmic reticulum. The protein localises to the nucleus membrane. It is found in the golgi apparatus. Its subcellular location is the cytoplasm. The protein resides in the perinuclear region. It localises to the secreted. The catalysed reaction is prostaglandin H2 = prostaglandin D2. In terms of biological role, catalyzes the conversion of PGH2 to PGD2, a prostaglandin involved in smooth muscle contraction/relaxation and a potent inhibitor of platelet aggregation. Involved in a variety of CNS functions, such as sedation, NREM sleep and PGE2-induced allodynia, and may have an anti-apoptotic role in oligodendrocytes. Binds small non-substrate lipophilic molecules, including biliverdin, bilirubin, retinal, retinoic acid and thyroid hormone, and may act as a scavenger for harmful hydrophobic molecules and as a secretory retinoid and thyroid hormone transporter. Possibly involved in development and maintenance of the blood-brain, blood-retina, blood-aqueous humor and blood-testis barrier. It is likely to play important roles in both maturation and maintenance of the central nervous system and male reproductive system. Involved in PLA2G3-dependent maturation of mast cells. PLA2G3 is secreted by immature mast cells and acts on nearby fibroblasts upstream to PTDGS to synthesize PGD2, which in turn promotes mast cell maturation and degranulation via PTGDR. This Mus musculus (Mouse) protein is Prostaglandin-H2 D-isomerase (Ptgds).